Consider the following 358-residue polypeptide: Peptide chain release factor 1 (358 aa).

N5-methylglutamine is present on Gln235.

The protein belongs to the prokaryotic/mitochondrial release factor family. Post-translationally, methylated by PrmC. Methylation increases the termination efficiency of RF1.

The protein resides in the cytoplasm. Its function is as follows. Peptide chain release factor 1 directs the termination of translation in response to the peptide chain termination codons UAG and UAA. The sequence is that of Peptide chain release factor 1 from Nitrosospira multiformis (strain ATCC 25196 / NCIMB 11849 / C 71).